The sequence spans 327 residues: MTTQQIVLQGPGPWGFRLVGGKDFEQPLAISRVTPGSKAAIANLCIGDLITAIDGEDTSSMTHLEAQNKIKGCADNMTLTVSRSEQKIWSPLVTEEGKRHPYKMNLASEPQEVLHIGSAHNRSAMPFTASPAPSTRVITNQYNSPTGLYSSENISNFNNAVESKTSASGEEANSRPVVQPHPSGSLIIDKDSEVYKMLQEKQELNEPPKQSTSFLVLQEILESDGKGDPNKPSGFRSVKAPVTKVAASVGNAQKLPICDKCGTGIVGVFVKLRDHHRHPECYVCTDCGINLKQKGHFFVEDQIYCEKHARERVTPPEGYDVVTVFRE.

T2 bears the N-acetylthreonine mark. A PDZ domain is found at T3 to E85. Residues S90 and S130 each carry the phosphoserine modification. Residue Y142 is modified to Phosphotyrosine. Residues V161 to G184 form a disordered region. Positions P256–P315 constitute an LIM zinc-binding domain. C258, C261, H278, C281, C284, C287, C305, and H308 together coordinate Zn(2+). T314 bears the Phosphothreonine mark. The residue at position 319 (Y319) is a Phosphotyrosine.

Interacts with ACTN1, ACTN2 and ACTN4. Interacts with PDLIM4. In terms of tissue distribution, expressed in heart, lung, spleen, testis and skeletal muscle.

The protein resides in the cytoplasm. It is found in the cytoskeleton. The protein localises to the myofibril. Its subcellular location is the sarcomere. It localises to the z line. Cytoskeletal protein that may act as an adapter that brings other proteins (like kinases) to the cytoskeleton. Involved in assembly, disassembly and directioning of stress fibers in fibroblasts. Required for the localization of ACTN1 and PALLD to stress fibers. Required for cell migration and in maintaining cell polarity of fibroblasts. This is PDZ and LIM domain protein 1 (Pdlim1) from Mus musculus (Mouse).